Reading from the N-terminus, the 304-residue chain is Putative S-adenosyl-L-methionine-dependent methyltransferase MAP_3385 (304 aa).

S-adenosyl-L-methionine-binding positions include D129 and 158–159 (DL).

Belongs to the UPF0677 family.

In terms of biological role, exhibits S-adenosyl-L-methionine-dependent methyltransferase activity. In Mycolicibacterium paratuberculosis (strain ATCC BAA-968 / K-10) (Mycobacterium paratuberculosis), this protein is Putative S-adenosyl-L-methionine-dependent methyltransferase MAP_3385.